Consider the following 153-residue polypeptide: Probable ubiquitin-conjugating enzyme E2 C (153 aa).

The UBC core domain maps to 6 to 153 (SVSKRLQSEL…KRYQEATSRP (148 aa)). The Glycyl thioester intermediate role is filled by C90.

Belongs to the ubiquitin-conjugating enzyme family. Component of the APC/C complex. Post-translationally, autoubiquitinated by the APC/C complex, leading to its degradation by the proteasome.

It catalyses the reaction S-ubiquitinyl-[E1 ubiquitin-activating enzyme]-L-cysteine + [E2 ubiquitin-conjugating enzyme]-L-cysteine = [E1 ubiquitin-activating enzyme]-L-cysteine + S-ubiquitinyl-[E2 ubiquitin-conjugating enzyme]-L-cysteine.. Its pathway is protein modification; protein ubiquitination. In terms of biological role, catalyzes the covalent attachment of ubiquitin to other proteins. Acts as an essential factor of the anaphase promoting complex/cyclosome (APC/C), a cell cycle-regulated ubiquitin ligase that controls progression through mitosis. Acts by initiating polyubiquitin chains on APC/C substrates, leading to the degradation of APC/C substrates by the proteasome and promoting mitotic exit. The protein is Probable ubiquitin-conjugating enzyme E2 C (ube2c) of Dictyostelium discoideum (Social amoeba).